The sequence spans 59 residues: Large ribosomal subunit protein bL32 (59 aa).

The span at 1-19 shows a compositional bias: basic residues; it reads MAQPKKKTSKSRRNMRRSH. The segment at 1 to 20 is disordered; it reads MAQPKKKTSKSRRNMRRSHD.

This sequence belongs to the bacterial ribosomal protein bL32 family.

The sequence is that of Large ribosomal subunit protein bL32 from Maridesulfovibrio salexigens (strain ATCC 14822 / DSM 2638 / NCIMB 8403 / VKM B-1763) (Desulfovibrio salexigens).